Here is a 434-residue protein sequence, read N- to C-terminus: Pre-B-cell leukemia transcription factor 3 (434 aa).

Residues 20 to 41 are disordered; sequence SVQGGMALPPPPHGHEGADGDG. Over residues 32–41 the composition is skewed to basic and acidic residues; the sequence is HGHEGADGDG. Positions 41 to 234 constitute a PBC domain; sequence GRKQDIGDIL…VMILRSRFLD (194 aa). The interval 48 to 127 is PBC-A; it reads DILHQIMTIT…EGVSGPEKGG (80 aa). Positions 130-234 are PBC-B; the sequence is AAAAAAAAAS…VMILRSRFLD (105 aa). The segment at residues 235–297 is a DNA-binding region (homeobox; TALE-type); sequence ARRKRRNFSK…NKRIRYKKNI (63 aa). Low complexity predominate over residues 326 to 341; the sequence is NQTNSPTTPNSGSSGS. Disordered stretches follow at residues 326-349 and 405-434; these read NQTNSPTTPNSGSSGSFNLPNSGD and ANGGWQDATTPSSVTSPTEGPGSVHSDTSN. Residues 405-422 show a composition bias toward polar residues; the sequence is ANGGWQDATTPSSVTSPT.

This sequence belongs to the TALE/PBX homeobox family. Interacts with PBXIP1.

The protein resides in the nucleus. In terms of biological role, transcriptional activator that binds the sequence 5'-ATCAATCAA-3'. The sequence is that of Pre-B-cell leukemia transcription factor 3 (Pbx3) from Mus musculus (Mouse).